A 215-amino-acid polypeptide reads, in one-letter code: Pyrrolidone-carboxylate peptidase (215 aa).

Residues E80, C143, and H167 contribute to the active site.

The protein belongs to the peptidase C15 family. As to quaternary structure, homotetramer.

The protein resides in the cytoplasm. It carries out the reaction Release of an N-terminal pyroglutamyl group from a polypeptide, the second amino acid generally not being Pro.. Removes 5-oxoproline from various penultimate amino acid residues except L-proline. The sequence is that of Pyrrolidone-carboxylate peptidase from Bacillus cereus (strain ZK / E33L).